The primary structure comprises 89 residues: UPF0367 protein PMM0124 (89 aa).

The protein belongs to the UPF0367 family.

The chain is UPF0367 protein PMM0124 from Prochlorococcus marinus subsp. pastoris (strain CCMP1986 / NIES-2087 / MED4).